A 38-amino-acid polypeptide reads, in one-letter code: Photosystem II reaction center protein L (38 aa).

Residues 17-37 traverse the membrane as a helical segment; that stretch reads SLYWGLLLIFVLAVLFSNYFF.

The protein belongs to the PsbL family. In terms of assembly, PSII is composed of 1 copy each of membrane proteins PsbA, PsbB, PsbC, PsbD, PsbE, PsbF, PsbH, PsbI, PsbJ, PsbK, PsbL, PsbM, PsbT, PsbX, PsbY, PsbZ, Psb30/Ycf12, at least 3 peripheral proteins of the oxygen-evolving complex and a large number of cofactors. It forms dimeric complexes.

The protein resides in the plastid. The protein localises to the chloroplast thylakoid membrane. Its function is as follows. One of the components of the core complex of photosystem II (PSII). PSII is a light-driven water:plastoquinone oxidoreductase that uses light energy to abstract electrons from H(2)O, generating O(2) and a proton gradient subsequently used for ATP formation. It consists of a core antenna complex that captures photons, and an electron transfer chain that converts photonic excitation into a charge separation. This subunit is found at the monomer-monomer interface and is required for correct PSII assembly and/or dimerization. The chain is Photosystem II reaction center protein L from Antirrhinum majus (Garden snapdragon).